Consider the following 469-residue polypeptide: GTPase Der (469 aa).

2 EngA-type G domains span residues 3-166 (PVIA…PEDE) and 177-350 (LRLA…ESAN). GTP-binding positions include 9 to 16 (GRPNVGKS), 56 to 60 (DTGGI), 118 to 121 (NKVD), 183 to 190 (GRPNVGKS), 230 to 234 (DTAGV), and 295 to 298 (NKWD). The 85-residue stretch at 351-435 (LKVSPAKLTQ…PVKIEFKTSE (85 aa)) folds into the KH-like domain.

The protein belongs to the TRAFAC class TrmE-Era-EngA-EngB-Septin-like GTPase superfamily. EngA (Der) GTPase family. In terms of assembly, associates with the 50S ribosomal subunit.

Functionally, GTPase that plays an essential role in the late steps of ribosome biogenesis. The protein is GTPase Der of Acinetobacter baumannii (strain SDF).